A 137-amino-acid chain; its full sequence is Small ribosomal subunit protein bS6 (137 aa).

The interval E113–K137 is disordered. Over residues I126 to K137 the composition is skewed to basic and acidic residues.

It belongs to the bacterial ribosomal protein bS6 family.

Functionally, binds together with bS18 to 16S ribosomal RNA. This is Small ribosomal subunit protein bS6 from Mycoplasma capricolum subsp. capricolum (strain California kid / ATCC 27343 / NCTC 10154).